The sequence spans 315 residues: Acetyl-coenzyme A carboxylase carboxyl transferase subunit beta, chloroplastic (315 aa).

One can recognise a CoA carboxyltransferase N-terminal domain in the interval 47–315 (LWTRCDSCEN…VYKESNSYLF (269 aa)). Positions 51, 54, 70, and 73 each coordinate Zn(2+). The C4-type zinc finger occupies 51–73 (CDSCENMLYVRFLKQNKRICEEC).

The protein belongs to the AccD/PCCB family. As to quaternary structure, acetyl-CoA carboxylase is a heterohexamer composed of biotin carboxyl carrier protein, biotin carboxylase and 2 subunits each of ACCase subunit alpha and ACCase plastid-coded subunit beta (accD). Zn(2+) is required as a cofactor.

Its subcellular location is the plastid. It localises to the chloroplast stroma. It carries out the reaction N(6)-carboxybiotinyl-L-lysyl-[protein] + acetyl-CoA = N(6)-biotinyl-L-lysyl-[protein] + malonyl-CoA. It functions in the pathway lipid metabolism; malonyl-CoA biosynthesis; malonyl-CoA from acetyl-CoA: step 1/1. Functionally, component of the acetyl coenzyme A carboxylase (ACC) complex. Biotin carboxylase (BC) catalyzes the carboxylation of biotin on its carrier protein (BCCP) and then the CO(2) group is transferred by the transcarboxylase to acetyl-CoA to form malonyl-CoA. The polypeptide is Acetyl-coenzyme A carboxylase carboxyl transferase subunit beta, chloroplastic (Physcomitrium patens (Spreading-leaved earth moss)).